A 1068-amino-acid polypeptide reads, in one-letter code: Huntingtin-interacting protein 1-related protein (1068 aa).

The residue at position 1 (methionine 1) is an N-acetylmethionine. The region spanning 23–151 (EREQFDKTQA…SFHLKHPQFP (129 aa)) is the ENTH domain. Positions 347 to 599 (SVKDDRDLQI…RSSQEQGELQ (253 aa)) form a coiled coil. 3 disordered regions span residues 424 to 443 (LEGE…ASAT), 529 to 549 (ARAQ…SSRL), and 582 to 608 (AALS…RESQ). Basic and acidic residues-rich tracts occupy residues 425-443 (EGER…ASAT) and 539-549 (EQSKSELSSRL). The span at 590 to 600 (RSSQEQGELQG) shows a compositional bias: low complexity. The I/LWEQ domain occupies 771–1012 (SLDVRQEELG…ELRKQHYVLA (242 aa)). The tract at residues 867–924 (RWTEGLISASKAVGWGATQLVEAADKVVLHTGKYEELIVCSHEIAASTAQLVAASKVK) is important for actin binding. The segment at 1016-1060 (GSPGEEVAIRPSTAPRSVTTKKPPLAQKPSVAPRQDHQLDKKDGI) is disordered. Serine 1017 is modified (phosphoserine). The segment covering 1049–1059 (RQDHQLDKKDG) has biased composition (basic and acidic residues).

Belongs to the SLA2 family. As to quaternary structure, homodimer. Interacts with actin; homodimerization promotes actin binding. Interacts with CLTB. Interacts with HIP1. Interacts (via ENTH and I/LWEQ domains) with BCL2L10. As to expression, brain, heart, kidney, pancreas, and liver, but not in lung or placenta.

The protein resides in the cytoplasm. It localises to the perinuclear region. The protein localises to the endomembrane system. It is found in the cytoplasmic vesicle. Its subcellular location is the clathrin-coated vesicle membrane. Component of clathrin-coated pits and vesicles, that may link the endocytic machinery to the actin cytoskeleton. Binds 3-phosphoinositides (via ENTH domain). May act through the ENTH domain to promote cell survival by stabilizing receptor tyrosine kinases following ligand-induced endocytosis. The protein is Huntingtin-interacting protein 1-related protein (HIP1R) of Homo sapiens (Human).